The primary structure comprises 149 residues: Potassium binding protein Kbp (149 aa).

Residues 23–91 (DKDDQAKKVQ…SVDDQVKTAT (69 aa)) form the BON domain. Residues 97–146 (QFYTVKSGDTLSAISKQVYGNANLYNKIFEANKPMLKSPDKIYPGQVLRI) enclose the LysM domain.

Its subcellular location is the cytoplasm. In terms of biological role, highly specific potassium binding protein that is required for normal growth in the presence of high levels of external K(+). May act as a sensor of cytoplasmic K(+) concentration. In Escherichia coli O6:H1 (strain CFT073 / ATCC 700928 / UPEC), this protein is Potassium binding protein Kbp.